The following is a 310-amino-acid chain: Tagatose-6-phosphate kinase (310 aa).

The protein belongs to the carbohydrate kinase PfkB family. LacC subfamily.

The enzyme catalyses D-tagatofuranose 6-phosphate + ATP = D-tagatofuranose 1,6-bisphosphate + ADP + H(+). Its pathway is carbohydrate metabolism; D-tagatose 6-phosphate degradation; D-glyceraldehyde 3-phosphate and glycerone phosphate from D-tagatose 6-phosphate: step 1/2. The protein is Tagatose-6-phosphate kinase of Staphylococcus epidermidis (strain ATCC 12228 / FDA PCI 1200).